The chain runs to 130 residues: Large ribosomal subunit protein bL12 (130 aa).

It belongs to the bacterial ribosomal protein bL12 family. As to quaternary structure, homodimer. Part of the ribosomal stalk of the 50S ribosomal subunit. Forms a multimeric L10(L12)X complex, where L10 forms an elongated spine to which 2 to 4 L12 dimers bind in a sequential fashion. Binds GTP-bound translation factors.

Functionally, forms part of the ribosomal stalk which helps the ribosome interact with GTP-bound translation factors. Is thus essential for accurate translation. In Prochlorococcus marinus (strain SARG / CCMP1375 / SS120), this protein is Large ribosomal subunit protein bL12.